A 98-amino-acid polypeptide reads, in one-letter code: MKIAHPAFAGTLESSDLQVRIEPNNDGGIELVLDSTVEQQFGHAIRQVVLHTLDAMQVRDALVTIEDKGALDCVIRARVQAAVMRACDVQNIEWSQLS.

At Ser-14 the chain carries O-(phosphoribosyl dephospho-coenzyme A)serine.

This sequence belongs to the CitD family. Oligomer with a subunit composition of (alpha,beta,gamma)6.

Its subcellular location is the cytoplasm. In terms of biological role, covalent carrier of the coenzyme of citrate lyase. The chain is Citrate lyase acyl carrier protein from Vibrio cholerae serotype O1 (strain ATCC 39315 / El Tor Inaba N16961).